Reading from the N-terminus, the 446-residue chain is Coagulation factor VII (446 aa).

Residues 1–24 form the signal peptide; it reads MVPQAHGLLLLCFLLQLQGPLGTA. Positions 25–41 are excised as a propeptide; that stretch reads VFITQEEAHGVLHRQRR. Residues 42-86 form the Gla domain; the sequence is ANSLLEELWPGSLERECNEEQCSFEEAREIFKSPERTKQFWIVYS. 10 positions are modified to 4-carboxyglutamate: Glu-47, Glu-48, Glu-55, Glu-57, Glu-60, Glu-61, Glu-66, Glu-67, Glu-70, and Glu-76. Cys-58 and Cys-63 are oxidised to a cystine. The region spanning 87–123 is the EGF-like 1; calcium-binding domain; the sequence is DGDQCASNPCQNGGTCQDHLKSYVCFCLLDFEGRNCE. Disulfide bonds link Cys-91–Cys-102, Cys-96–Cys-111, Cys-113–Cys-122, Cys-132–Cys-143, Cys-139–Cys-153, Cys-155–Cys-168, Cys-176–Cys-303, Cys-200–Cys-205, Cys-219–Cys-235, and Cys-351–Cys-370. An O-linked (Glc...) serine; alternate glycan is attached at Ser-93. Residue Ser-93 is glycosylated (O-linked (Xyl...) serine; alternate). Asp-104 is subject to (3R)-3-hydroxyaspartate. The EGF-like 2 domain maps to 128–169; sequence EQLICANENGDCDQYCRDHVGTKRTCSCHEDYTLQPDEVSCK. N-linked (GlcNAc...) asparagine glycosylation is present at Asn-186. A Peptidase S1 domain is found at 194–433; sequence IVGGNVCPKG…YIDWLVRHMD (240 aa). The Charge relay system role is filled by His-234. N-linked (GlcNAc...) asparagine glycosylation is present at Asn-244. The Charge relay system role is filled by Asp-283. Residue Asp-379 coordinates substrate. A disulfide bond links Cys-381 and Cys-409. Ser-385 acts as the Charge relay system in catalysis.

The protein belongs to the peptidase S1 family. As to quaternary structure, heterodimer of a light chain and a heavy chain linked by a disulfide bond. Post-translationally, the vitamin K-dependent, enzymatic carboxylation of some glutamate residues allows the modified protein to bind calcium. The iron and 2-oxoglutarate dependent 3-hydroxylation of aspartate and asparagine is (R) stereospecific within EGF domains. In terms of processing, can be either O-glucosylated or O-xylosylated at Ser-93 by POGLUT1. As to expression, plasma and liver.

The protein localises to the secreted. The catalysed reaction is Selective cleavage of Arg-|-Ile bond in factor X to form factor Xa.. Functionally, initiates the extrinsic pathway of blood coagulation. Serine protease that circulates in the blood in a zymogen form. Factor VII is converted to factor VIIa by factor Xa, factor XIIa, factor IXa, or thrombin by minor proteolysis. In the presence of tissue factor and calcium ions, factor VIIa then converts factor X to factor Xa by limited proteolysis. Factor VIIa also converts factor IX to factor IXa in the presence of tissue factor and calcium. The polypeptide is Coagulation factor VII (F7) (Mus musculus (Mouse)).